The primary structure comprises 157 residues: Phosphomannomutase (157 aa).

The active-site Phosphoserine intermediate is Ser-98. Ser-98 is a binding site for Mg(2+).

It belongs to the phosphohexose mutase family. It depends on Mg(2+) as a cofactor.

It catalyses the reaction alpha-D-mannose 1-phosphate = D-mannose 6-phosphate. Its pathway is nucleotide-sugar biosynthesis; GDP-alpha-D-mannose biosynthesis; alpha-D-mannose 1-phosphate from D-fructose 6-phosphate: step 2/2. It participates in capsule biogenesis; capsule polysaccharide biosynthesis. In terms of biological role, involved in the biosynthesis of the K2 capsular polysaccharide biosynthesis. The protein is Phosphomannomutase (manB) of Klebsiella pneumoniae.